We begin with the raw amino-acid sequence, 541 residues long: Lipase-like PAD4 (541 aa).

S118 acts as the Nucleophile in catalysis. Active-site charge relay system residues include D178 and H229.

Belongs to the AB hydrolase superfamily. Lipase family. As to quaternary structure, part of a nuclear complex made of EDS1, SG101 and PAD4 that can be redirected to the cytoplasm in the presence of an extranuclear form of EDS1. Sabilized by direct interaction with EDS1 in infected leaves. Part of a nuclear protein complex made of VICTR, PAD4 and EDS1. Interacts with VICTR. Interacts with EDS1.

The protein resides in the nucleus. It localises to the cytoplasm. Probable lipase required downstream of MPK4 for accumulation of the plant defense-potentiating molecule, salicylic acid, thus contributing to the plant innate immunity against invasive biotrophic pathogens and to defense mechanisms upon recognition of microbe-associated molecular patterns (MAMPs). Participates in the regulation of various molecular and physiological processes that influence fitness. Together with SG101, required for programmed cell death (PCD) triggered by NBS-LRR resistance proteins (e.g. RPS4, RPW8.1 and RPW8.2) in response to the fungal toxin fumonisin B1 (FB1) and avirulent pathogens (e.g. P.syringae pv. tomato strain DC3000 avrRps4 and pv. maculicola, turnip crinkle virus (TCV), and H.arabidopsidis isolates CALA2, EMOY2, EMWA1 and HIND4). Together with EDS1, confers a basal resistance by restricting the growth of virulent pathogens (e.g. H.arabidopsidis isolates NOCO2 and EMCO5, E.orontii isolate MGH, and P.syringae pv. tomato strain DC3000 or expressing HopW1-1 (HopPmaA)). Necessary for the salicylic acid-(SA-) dependent systemic acquired resistance (SAR) response that involves expression of multiple defense responses, including synthesis of the phytoalexin camalexin and expression of pathogenesis-related genes (e.g. PR1, ALD1, BGL2 and PR5) in response to pathogens, triggering a signal amplification loop that increases SA levels via EDS5 and SID2, but, together with EDS1, seems to repress the ethylene/jasmonic acid (ET/JA) defense pathway. May also function in response to abiotic stresses such as UV-C light and LSD1-dependent acclimatization to light conditions that promote excess excitation energy (EEE), probably by transducing redox signals and modulating stomatal conductance. Regulates the formation of lysigenous aerenchyma in hypocotyls in response to hypoxia, maybe via hydrogen peroxide production. Modulates leaf senescence in insect-infested tissue and triggers a phloem-based defense mechanism including antibiosis (e.g. green peach aphid (GPA), M.persicae) to limit phloem sap uptake and insect growth, thus providing an EDS1-independent basal resistance to insects. Also involved in regulation of root meristematic zone-targeted growth arrest together with EDS1 and in a VICTR-dependent manner. The sequence is that of Lipase-like PAD4 (PAD4) from Arabidopsis thaliana (Mouse-ear cress).